Here is a 141-residue protein sequence, read N- to C-terminus: ATP synthase epsilon chain (141 aa).

This sequence belongs to the ATPase epsilon chain family. As to quaternary structure, F-type ATPases have 2 components, CF(1) - the catalytic core - and CF(0) - the membrane proton channel. CF(1) has five subunits: alpha(3), beta(3), gamma(1), delta(1), epsilon(1). CF(0) has three main subunits: a, b and c.

The protein resides in the cell inner membrane. Produces ATP from ADP in the presence of a proton gradient across the membrane. The polypeptide is ATP synthase epsilon chain (Chromohalobacter salexigens (strain ATCC BAA-138 / DSM 3043 / CIP 106854 / NCIMB 13768 / 1H11)).